The primary structure comprises 971 residues: MTEKTSSLVFSAQYVALVHTICSFAAFFIPLALALYTHYYQVVKNEFYGYPEEWFPSVSATIGDWYPERSVFQWLIALTATPRLLVLLLWFTLSGISRPSVIITTALGVLRTALCGGWVYVTSTDDHDWHDIFMIGYLISNAPWFILVSKCSPVNSMASRIRNIGSALFVLTIFPLIYWYIQHKFKHIPGAYTVYAFFEWSLILWDILFDSALYWDFKPLVFNLHTSKTYSNPSSFATRKKEKGEHLSYAEAAAVGTQAKNIKKDSNVKCSKKQILFSLLYFSSEVYLSFVFWSVLTSLGLLVWYFPLWHMGISGYEACILFELSPFLLGIPLLRKFASKVPVIFLFLNVIGIAAYKLEDPVHRLFVTAFSVCCECLAWTSLFSNISPENLAIERKISTFLFGLLASSIAKYSFFSNNPIWPILNETNGGKQIPALIVGIIACLIFAIFHVQQTTANAVEHFKLRKITALSAALSLGTVLFCLHTFLCDSTVLMTWSWDGYPIKGPQPYPHGAVSIVVSICAVLVAPYLYQSGAFMLIGFVLACFGSYFMYINHGWCSYLGGLIFTSYVLIYSFASIRISSFYSPAKVWGGAFLVYILYSLAHVWVVAYEFVPGGPILRERTSYILIFIGWNLAALVPAYSGESKEPNKADSSVVDIKQSDSSYRRRSFKKSLLTGFCLALMALKFAIQNMPPYDYTPYHPNEKLFTAGIWTIHFGLDNFMYASENRIRDAVRDMELDVFGLLESDTQRLIMGFRDLTQVLAHDLGMYADYGPGPDKHTWGAALLSKFPIVNSTHHLLPSPQGELAPAIHATLDVYGELIDVVVSHNGQYESQLDRRLQSTELARIMRESPRPLVFLGYVVSNVGQEPQTILTRDTGMLDIEPADYDRWCQYIFYRGVKRIGYARLHRSTITDTELQTGKFLVTKDLGRNVRIDKEHVPESHRYPSLFEGTGVNGHYYDNNLVVHEPWYYD.

The tract at residues 1 to 242 (MTEKTSSLVF…PSSFATRKKE (242 aa)) is PGAP2-like. A run of 19 helical transmembrane segments spans residues 15–35 (VALV…ALAL), 71–91 (VFQW…LLWF), 101–121 (VIIT…WVYV), 129–149 (WHDI…ILVS), 161–181 (IRNI…YWYI), 188–208 (IPGA…WDIL), 286–306 (VYLS…VWYF), 313–333 (ISGY…GIPL), 336–356 (KFAS…IAAY), 366–386 (FVTA…FSNI), 397–417 (ISTF…FFSN), 432–452 (QIPA…FHVQ), 467–487 (ITAL…HTFL), 509–529 (YPHG…APYL), 532–552 (SGAF…FMYI), 555–575 (GWCS…YSFA), 588–608 (VWGG…WVVA), 622–642 (TSYI…AYSG), and 673–693 (LLTG…NMPP). The segment at 243 to 971 (KGEHLSYAEA…LVVHEPWYYD (729 aa)) is PGAP2IP-like. Residue histidine 826 is part of the active site.

This sequence in the N-terminal section; belongs to the PGAP2 family. The protein in the C-terminal section; belongs to the PGAP2IP family.

It is found in the cell membrane. The protein localises to the endoplasmic reticulum membrane. In terms of biological role, involved in the maintenance of cell wall integrity. Required for the replacement of the diacylglycerol moiety by ceramides during GPI-anchor maturation. This Schizosaccharomyces pombe (strain 972 / ATCC 24843) (Fission yeast) protein is Protein cwh43 (cwh43).